A 90-amino-acid polypeptide reads, in one-letter code: UPF0297 protein Cthe_0151 (90 aa).

Belongs to the UPF0297 family.

The polypeptide is UPF0297 protein Cthe_0151 (Acetivibrio thermocellus (strain ATCC 27405 / DSM 1237 / JCM 9322 / NBRC 103400 / NCIMB 10682 / NRRL B-4536 / VPI 7372) (Clostridium thermocellum)).